A 130-amino-acid polypeptide reads, in one-letter code: Small ribosomal subunit protein uS11c (130 aa).

This sequence belongs to the universal ribosomal protein uS11 family. As to quaternary structure, part of the 30S ribosomal subunit.

The protein resides in the plastid. The protein localises to the chloroplast. The chain is Small ribosomal subunit protein uS11c from Psilotum nudum (Whisk fern).